The chain runs to 271 residues: MTWKKQMALLAKPYYWVNILLAISYLLAKKTQFICTRLFILAGEDEACDLDSREVEILFFLLIVVMIRSRKTGSVTMINYLASSFLYTKVANAILWAYADFRYGLGFLLLCVLVGMVLPEPSYRGPEHITYFRNAQVFEEELARDKRTSWLICFYTVWNPSCVNFAPVFAELSAEYNTDHLKFGKIDIGRFPDVAQKYRISDSSFSRQLPTVILFQQGKETDRRPCVDSKGKLQKFFFSSDNVRATFGLNQLYKEAIERLPIAPKEAKKVQ.

Positions 1 to 28 (MTWKKQMALLAKPYYWVNILLAISYLLA) are cleaved as a signal peptide. The Extracellular portion of the chain corresponds to 29 to 102 (KKTQFICTRL…AILWAYADFR (74 aa)). The chain crosses the membrane as a helical span at residues 103–123 (YGLGFLLLCVLVGMVLPEPSY). A Thioredoxin domain is found at 112–262 (VLVGMVLPEP…YKEAIERLPI (151 aa)). The Cytoplasmic segment spans residues 124–271 (RGPEHITYFR…IAPKEAKKVQ (148 aa)). The Di-lysine motif signature appears at 268–271 (KKVQ).

It localises to the membrane. In Drosophila melanogaster (Fruit fly), this protein is Thioredoxin-related transmembrane protein 2 homolog.